Reading from the N-terminus, the 432-residue chain is FAD-dependent monooxygenase pynG (432 aa).

Residues E32, R103, D315, and A328 each coordinate FAD.

The protein belongs to the paxM FAD-dependent monooxygenase family. It depends on FAD as a cofactor.

It participates in secondary metabolite biosynthesis. Its function is as follows. FAD-dependent monooxygenase; part of the gene cluster that mediates the biosynthesis of pyranonigrins, a family of antioxidative compounds. The first step of pyranonigrins biosynthesis is performed by the hybrid PKS-NRPS synthetase that condenses 6 malonyl-CoA units to an acetyl starter unit, to form a 1,3,5-trioxotetradecane-6,8-dienyl-ACP. The enoyl reductase (ER) domain of pynA is likely to be functional during the first two rounds of polyketide chain extension, to generate the saturated C-C bonds of the alkyl side chain. PynA subsequently forms the amide bond between the acyl chain and L-serine. Although pynA has a terminal reductase domain, it appears to require the thioesterase pynI for the release of the straight-chain intermediate from pynA via the formation of a tetramic acid pyranonigrin J. The methyltransferase pynC then coverts pyranonigrin J to pyranonigrin I via N-methylation. The FAD-dependent monooxygenase pynG catalyzes an epoxidation-mediated cyclization to form the dihydro-gamma-pyrone moiety, followed by pynD-catalyzed oxidation of the alcohol to the ketone and enolization to yield the characteristic tetramic acid-fused gamma-pyrone core of pyranonigrin H. Pyranonigrin H is substrate of pynH for dehydration-mediated exo-methylene formation from the serine side chain to produce pyranonigrin E, before the oxidase pynE reduces the exo-methylene of pyranonigrin E into a pendant methyl to form pyranonigrin G. The FAD-linked oxidoreductase pynB performs the reverse reaction and converts pyranonigrin G back to pyranonigrin E. In Aspergillus niger (strain ATCC MYA-4892 / CBS 513.88 / FGSC A1513), this protein is FAD-dependent monooxygenase pynG.